We begin with the raw amino-acid sequence, 428 residues long: Adenylosuccinate synthetase (428 aa).

Residues 12–18 (GDEGKGK) and 40–42 (GHT) each bind GTP. Aspartate 13 functions as the Proton acceptor in the catalytic mechanism. Positions 13 and 40 each coordinate Mg(2+). Residues 13–16 (DEGK), 38–41 (NAGH), threonine 128, arginine 142, glutamine 223, threonine 238, and arginine 302 contribute to the IMP site. Histidine 41 acts as the Proton donor in catalysis. Substrate is bound at residue 298–304 (TTTGRPR). GTP contacts are provided by residues arginine 304, 330-332 (KLD), and 412-414 (SVG).

It belongs to the adenylosuccinate synthetase family. Homodimer. Requires Mg(2+) as cofactor.

Its subcellular location is the cytoplasm. The enzyme catalyses IMP + L-aspartate + GTP = N(6)-(1,2-dicarboxyethyl)-AMP + GDP + phosphate + 2 H(+). Its pathway is purine metabolism; AMP biosynthesis via de novo pathway; AMP from IMP: step 1/2. In terms of biological role, plays an important role in the de novo pathway of purine nucleotide biosynthesis. Catalyzes the first committed step in the biosynthesis of AMP from IMP. This chain is Adenylosuccinate synthetase, found in Desulforamulus reducens (strain ATCC BAA-1160 / DSM 100696 / MI-1) (Desulfotomaculum reducens).